Here is a 585-residue protein sequence, read N- to C-terminus: ATP-dependent lipid A-core flippase (585 aa).

5 helical membrane passes run 24–44, 65–85, 143–163, 165–185, and 253–273; these read LWKVFALAVLGNVIYALASAA, LLVPMLIIGIFALRGLGSFCG, ITVVLREGFTVIGLMGYMIYV, WKLTLLFLVLGPIIGVLIGYV, and PIIQLVISVFIALLVWLALSP. An ABC transmembrane type-1 domain is found at 29–310; sequence ALAVLGNVIY…LTEVNAVIQR (282 aa). The ABC transporter domain occupies 342–578; the sequence is LEFKSLGFAY…DGAYAALHKL (237 aa). 376-383 is an ATP binding site; the sequence is GRSGSGKS.

It belongs to the ABC transporter superfamily. Lipid exporter (TC 3.A.1.106) family. As to quaternary structure, homodimer.

The protein resides in the cell inner membrane. It catalyses the reaction ATP + H2O + lipid A-core oligosaccharideSide 1 = ADP + phosphate + lipid A-core oligosaccharideSide 2.. Functionally, involved in lipopolysaccharide (LPS) biosynthesis. Translocates lipid A-core from the inner to the outer leaflet of the inner membrane. Transmembrane domains (TMD) form a pore in the inner membrane and the ATP-binding domain (NBD) is responsible for energy generation. The sequence is that of ATP-dependent lipid A-core flippase from Hahella chejuensis (strain KCTC 2396).